The primary structure comprises 876 residues: Neurotrypsin (876 aa).

The first 20 residues, 1–20, serve as a signal peptide directing secretion; it reads MTLARFVLALMLGALPEVVG. Asn26 carries N-linked (GlcNAc...) asparagine glycosylation. The interval 29 to 89 is disordered; it reads LHHSHRHSPP…ALQAGHTPRP (61 aa). Residues 43 to 54 are compositionally biased toward low complexity; sequence YPSYYLPTQQRP. Pro residues predominate over residues 57–72; it reads TRPPPPLPRFPRPPRA. The Kringle domain occupies 94–166; the sequence is CPAGEPWVSV…GKVDWGYCDC (73 aa). Disulfide bonds link Cys94-Cys166, Cys110-Cys150, Cys139-Cys164, Cys196-Cys260, Cys209-Cys270, Cys240-Cys250, Cys306-Cys370, Cys319-Cys380, Cys350-Cys360, Cys413-Cys476, Cys426-Cys486, Cys456-Cys466, Cys526-Cys590, Cys539-Cys600, Cys570-Cys580, Cys620-Cys751, Cys662-Cys678, Cys766-Cys832, Cys795-Cys809, and Cys822-Cys851. SRCR domains lie at 171-272, 281-382, 388-488, and 501-602; these read VRLR…TCSF, IRLA…SCTP, IRLA…ACYP, and VRLM…ICDY. The tract at residues 620–631 is zymogen activation region; that stretch reads CGLRLLHRRQKR. The Peptidase S1 domain occupies 632 to 875; that stretch reads IIGGKNSLRG…FVPWIKSVTK (244 aa). His677 functions as the Charge relay system in the catalytic mechanism. The N-linked (GlcNAc...) asparagine glycan is linked to Asn684. Asp727 functions as the Charge relay system in the catalytic mechanism. Residue Ser826 is the Charge relay system of the active site.

It belongs to the peptidase S1 family.

The protein localises to the secreted. In terms of biological role, plays a role in neuronal plasticity and the proteolytic action may subserve structural reorganizations associated with learning and memory operations. This is Neurotrypsin (PRSS12) from Gorilla gorilla gorilla (Western lowland gorilla).